The chain runs to 234 residues: Ribitol-5-phosphate cytidylyltransferase (234 aa).

Residues 7–10 (LAGG) and 79–85 (GSIVQKS) each bind CTP.

This sequence belongs to the IspD/TarI cytidylyltransferase family. TarI subfamily.

The catalysed reaction is D-ribitol 5-phosphate + CTP + H(+) = CDP-L-ribitol + diphosphate. Its pathway is cell wall biogenesis; poly(ribitol phosphate) teichoic acid biosynthesis. Catalyzes the transfer of the cytidylyl group of CTP to D-ribitol 5-phosphate. This Lacticaseibacillus paracasei (strain ATCC 334 / BCRC 17002 / CCUG 31169 / CIP 107868 / KCTC 3260 / NRRL B-441) (Lactobacillus paracasei) protein is Ribitol-5-phosphate cytidylyltransferase.